The primary structure comprises 4753 residues: Dynein heavy chain domain-containing protein 1 (4753 aa).

Coiled-coil stretches lie at residues 826 to 858 (IHAI…ALHE) and 936 to 991 (KLQQ…LSEL). Residues 2688-2766 (HLGKDHQESE…SRGMKESISH (79 aa)) form a disordered region. Over residues 2695 to 2712 (ESEEEEEEERVPEVESEG) the composition is skewed to acidic residues. The span at 2740–2751 (RVSNSRDPSLTP) shows a compositional bias: polar residues. Coiled coils occupy residues 3125–3227 (LQQQ…MSKA), 3590–3651 (MRNQ…QGSK), and 4431–4460 (GAQL…LTHV). The interval 3580–3657 (ALTEGRGKGL…QGSKPAYETQ (78 aa)) is disordered. A compositionally biased stretch (acidic residues) spans 3602–3615 (KEEDDESEESNEAE). A compositionally biased stretch (basic and acidic residues) spans 3616–3631 (DQTKEQKAEERKNEQE). Positions 3632 to 3641 (KEQEENEEKE) are enriched in acidic residues. The interval 4669-4697 (ALQDSPSSQPSPLPPVSISTQAPGTSDLP) is disordered.

The protein belongs to the dynein heavy chain family. In terms of tissue distribution, expressed in spermatozoa (at protein level).

It is found in the cell projection. It localises to the cilium. Its subcellular location is the flagellum. In terms of biological role, essential for the normal assembly and function of sperm flagella axonemes. This is Dynein heavy chain domain-containing protein 1 (DNHD1) from Homo sapiens (Human).